A 167-amino-acid polypeptide reads, in one-letter code: MAALPAESDTSERIKVSIADYAVAEAGTISTSGLGSCLGLAIYDPEAGVSALVHPMLPRRDGNDDRPPERFVDSGIDVVVDALLEHGASKASLRAKIAGGAAVVDFGSDDGDSIGDRNIEVAREELSDRGIELVGEEVGGDCGRTVKVDAATGDVNVSRTDGEETTL.

The protein belongs to the CheD family.

It carries out the reaction L-glutaminyl-[protein] + H2O = L-glutamyl-[protein] + NH4(+). In terms of biological role, probably deamidates glutamine residues to glutamate on methyl-accepting chemotaxis receptors (MCPs), playing an important role in chemotaxis. The sequence is that of Probable chemoreceptor glutamine deamidase CheD from Natronomonas pharaonis (strain ATCC 35678 / DSM 2160 / CIP 103997 / JCM 8858 / NBRC 14720 / NCIMB 2260 / Gabara) (Halobacterium pharaonis).